The chain runs to 731 residues: Golgin subfamily A member 5 (731 aa).

An N-acetylserine modification is found at Ser-2. Residues 2-698 (SWFVDLAGKA…IFLRRYPIAR (697 aa)) are Cytoplasmic-facing. Arg-89 is modified (dimethylated arginine). The segment at 93–222 (EASHPVENAS…PTPNDDGKSH (130 aa)) is disordered. Residue Ser-116 is modified to Phosphoserine. Residues 134 to 146 (PTGRVEIRKEKGK) are compositionally biased toward basic and acidic residues. A compositionally biased stretch (low complexity) spans 147 to 167 (TPVFQSSQTSSVSSVNPSVTT). Polar residues predominate over residues 173–188 (ENSFGSQTHEAASNSD). The span at 189–199 (SSHEGQEESSK) shows a compositional bias: basic and acidic residues. The stretch at 216 to 632 (NDDGKSHELS…EQQMNSASGS (417 aa)) forms a coiled coil. Residues 699 to 719 (VFVIIYMALLHLWVMIVLLTY) form a helical; Anchor for type IV membrane protein membrane-spanning segment. Residues 720–731 (TPEMHHDQPYGK) lie on the Lumenal side of the membrane.

As to quaternary structure, homodimer. Interacts with RAB1A that has been activated by GTP-binding, and possibly also with OCRL1. Interacts with isoform CASP of CUX1. Highly phosphorylated during mitosis. Phosphorylation is barely detectable during interphase. In terms of tissue distribution, ubiquitous. Highly expressed in seminiferous tubules and Leydig cells in testis, and detected at much lower levels in the other tissues tested. Expression is very low or not detectable in spermatozoa.

The protein localises to the golgi apparatus membrane. Involved in maintaining Golgi structure. Stimulates the formation of Golgi stacks and ribbons. Involved in intra-Golgi retrograde transport. The protein is Golgin subfamily A member 5 (GOLGA5) of Homo sapiens (Human).